Here is a 493-residue protein sequence, read N- to C-terminus: Ketol-acid reductoisomerase (NADP(+)) (493 aa).

The 195-residue stretch at 14–208 (LDQLGRCRFM…GGHRAGVLES (195 aa)) folds into the KARI N-terminal Rossmann domain. Residues 45 to 48 (CGAQ), Arg-68, Arg-76, Ser-78, and 108 to 110 (DKQ) contribute to the NADP(+) site. The active site involves His-132. Gly-158 serves as a coordination point for NADP(+). 2 KARI C-terminal knotted domains span residues 209–345 (SFVA…APKG) and 346–486 (ENIK…MTDM). Mg(2+) contacts are provided by Asp-217, Glu-221, Glu-390, and Glu-394. Ser-415 contributes to the substrate binding site.

The protein belongs to the ketol-acid reductoisomerase family. Requires Mg(2+) as cofactor.

The enzyme catalyses (2R)-2,3-dihydroxy-3-methylbutanoate + NADP(+) = (2S)-2-acetolactate + NADPH + H(+). It catalyses the reaction (2R,3R)-2,3-dihydroxy-3-methylpentanoate + NADP(+) = (S)-2-ethyl-2-hydroxy-3-oxobutanoate + NADPH + H(+). Its pathway is amino-acid biosynthesis; L-isoleucine biosynthesis; L-isoleucine from 2-oxobutanoate: step 2/4. It functions in the pathway amino-acid biosynthesis; L-valine biosynthesis; L-valine from pyruvate: step 2/4. Functionally, involved in the biosynthesis of branched-chain amino acids (BCAA). Catalyzes an alkyl-migration followed by a ketol-acid reduction of (S)-2-acetolactate (S2AL) to yield (R)-2,3-dihydroxy-isovalerate. In the isomerase reaction, S2AL is rearranged via a Mg-dependent methyl migration to produce 3-hydroxy-3-methyl-2-ketobutyrate (HMKB). In the reductase reaction, this 2-ketoacid undergoes a metal-dependent reduction by NADPH to yield (R)-2,3-dihydroxy-isovalerate. The sequence is that of Ketol-acid reductoisomerase (NADP(+)) from Histophilus somni (strain 129Pt) (Haemophilus somnus).